The primary structure comprises 129 residues: uncharacterized protein (129 aa).

It is found in the cytoplasm. The protein localises to the cytosol. The protein resides in the nucleus. This is an uncharacterized protein from Schizosaccharomyces pombe (strain 972 / ATCC 24843) (Fission yeast).